The following is a 319-amino-acid chain: Protein-methionine-sulfoxide reductase catalytic subunit MsrP (319 aa).

A signal peptide (tat-type signal) is located at residues 1–54 (MSSFKPSRFSTARLTGDAVTPKSIYLRRREFMIGLGAIAATGAASSAFADPLEA). Residues Asn-75, 78 to 79 (YE), Cys-133, Asn-218, Arg-223, and 234 to 236 (GIK) contribute to the Mo-molybdopterin site.

It belongs to the MsrP family. In terms of assembly, heterodimer of a catalytic subunit (MsrP) and a heme-binding subunit (MsrQ). Mo-molybdopterin is required as a cofactor. Predicted to be exported by the Tat system. The position of the signal peptide cleavage has not been experimentally proven.

It is found in the periplasm. It catalyses the reaction L-methionyl-[protein] + a quinone + H2O = L-methionyl-(S)-S-oxide-[protein] + a quinol. The enzyme catalyses L-methionyl-[protein] + a quinone + H2O = L-methionyl-(R)-S-oxide-[protein] + a quinol. In terms of biological role, part of the MsrPQ system that repairs oxidized periplasmic proteins containing methionine sulfoxide residues (Met-O), using respiratory chain electrons. Thus protects these proteins from oxidative-stress damage caused by reactive species of oxygen and chlorine generated by the host defense mechanisms. MsrPQ is essential for the maintenance of envelope integrity under bleach stress, rescuing a wide series of structurally unrelated periplasmic proteins from methionine oxidation. The catalytic subunit MsrP is non-stereospecific, being able to reduce both (R-) and (S-) diastereoisomers of methionine sulfoxide. The polypeptide is Protein-methionine-sulfoxide reductase catalytic subunit MsrP (Brucella melitensis biotype 1 (strain ATCC 23456 / CCUG 17765 / NCTC 10094 / 16M)).